Reading from the N-terminus, the 405-residue chain is Subtilisin-like protease 6 (405 aa).

An N-terminal signal peptide occupies residues 1 to 18 (FITKAIPIVLAALSAVNG). Positions 19–125 (AKILEAGPHA…VRTSTNGTNL (107 aa)) are excised as a propeptide. Residues 34 to 118 (KYIVVMKKDV…YIEPDFVVRT (85 aa)) enclose the Inhibitor I9 domain. 2 N-linked (GlcNAc...) asparagine glycosylation sites follow: Asn-121 and Asn-124. In terms of domain architecture, Peptidase S8 spans 133–405 (SWGLARVGSK…GEGTTGKLIY (273 aa)). Catalysis depends on charge relay system residues Asp-165 and His-196. 2 N-linked (GlcNAc...) asparagine glycosylation sites follow: Asn-250 and Asn-262. Ser-356 acts as the Charge relay system in catalysis.

Belongs to the peptidase S8 family.

The protein localises to the secreted. Functionally, secreted subtilisin-like serine protease with keratinolytic activity that contributes to pathogenicity. This is Subtilisin-like protease 6 (SUB6) from Trichophyton schoenleinii.